Reading from the N-terminus, the 434-residue chain is MSFNTLIDWNSCSPEQQRALLTRPAISASDSITRTVSDILDNVKTRGDDALREYSAKFDKTEVTALRVTPEEIAAAGARLSDELKQAMTAAVKNIETFHSAQTLPPVDVETQPGVRCQQVTRPVSSVGLYIPGGSAPLFSTVLMLATPARIAGCQKVVLCSPPPIADEILYAAQLCGVQEIFNVGGAQAIAALAFGSESVPKVDKIFGPGNAFVTEAKRQVSQRLDGAAIDMPAGPSEVLVIADSGATPDFVASDLLSQAEHGPDSQVILLTPDADIARKVAEAVERQLAELPRADTARQALSASRLIVTKDLAQCVAISNQYGPEHLIIQTRNARDLVDAITSAGSVFLGDWSPESAGDYASGTNHVLPTYGYTATCSSLGLADFQKRMTVQELSKAGFSALASTIETLAAAERLTAHKNAVTLRVNALKEQA.

NAD(+) is bound by residues Tyr130, Gln188, and Asn211. Substrate is bound by residues Ser237, Gln259, and His262. Residues Gln259 and His262 each contribute to the Zn(2+) site. Catalysis depends on proton acceptor residues Glu326 and His327. Substrate contacts are provided by His327, Asp360, Glu414, and His419. Asp360 is a Zn(2+) binding site. His419 is a binding site for Zn(2+).

It belongs to the histidinol dehydrogenase family. Homodimer. The cofactor is Zn(2+). It depends on Mn(2+) as a cofactor.

The enzyme catalyses L-histidinol + 2 NAD(+) + H2O = L-histidine + 2 NADH + 3 H(+). The protein operates within amino-acid biosynthesis; L-histidine biosynthesis; L-histidine from 5-phospho-alpha-D-ribose 1-diphosphate: step 9/9. Activity is lost when the metal is removed through urea denaturation or chelation, and can be regained by addition of metal. Functionally, catalyzes the sequential NAD-dependent oxidations of L-histidinol to L-histidinaldehyde and then to L-histidine. This is Histidinol dehydrogenase (hisD) from Salmonella typhimurium (strain LT2 / SGSC1412 / ATCC 700720).